The primary structure comprises 1547 residues: ABC multidrug transporter atrF (1547 aa).

Disordered stretches follow at residues methionine 1 to alanine 66 and threonine 85 to aspartate 123. Residues serine 10 to asparagine 19 are compositionally biased toward polar residues. Positions serine 36–serine 47 are enriched in low complexity. Residues arginine 51 to alanine 66 are compositionally biased toward basic and acidic residues. Acidic residues predominate over residues lysine 111–aspartate 123. The ABC transporter 1 domain occupies isoleucine 197 to glutamate 439. N-linked (GlcNAc...) asparagine glycosylation is found at asparagine 299 and asparagine 363. 7 consecutive transmembrane segments (helical) span residues leucine 552–glycine 572, alanine 586–valine 606, phenylalanine 635–leucine 655, valine 657–threonine 677, glycine 698–isoleucine 718, isoleucine 722–threonine 742, and phenylalanine 804–phenylalanine 824. An ABC transporter 2 domain is found at phenylalanine 892–glycine 1130. Asparagine 905 carries N-linked (GlcNAc...) asparagine glycosylation. Glycine 928–threonine 935 is a binding site for ATP. N-linked (GlcNAc...) asparagine glycosylation is found at asparagine 980 and asparagine 999. 8 consecutive transmembrane segments (helical) span residues phenylalanine 1230–isoleucine 1250, isoleucine 1260–isoleucine 1280, isoleucine 1309–phenylalanine 1329, serine 1334–glycine 1354, tryptophan 1356–valine 1376, tyrosine 1397–phenylalanine 1417, cysteine 1491–tyrosine 1511, and phenylalanine 1520–phenylalanine 1540.

It belongs to the ABC transporter superfamily. ABCG family. PDR (TC 3.A.1.205) subfamily.

The protein localises to the cell membrane. The catalysed reaction is voriconazole(in) + ATP + H2O = voriconazole(out) + ADP + phosphate + H(+). It carries out the reaction fluconazole(in) + ATP + H2O = fluconazole(out) + ADP + phosphate + H(+). Functionally, pleiotropic ABC efflux transporter involved in the basal level of azole susceptibility. Confers resistance to fluconazole and voriconazole. The protein is ABC multidrug transporter atrF of Aspergillus fumigatus (strain ATCC MYA-4609 / CBS 101355 / FGSC A1100 / Af293) (Neosartorya fumigata).